The following is a 249-amino-acid chain: MSVTPVLDPEWQRSPEGLDYLSRVLRHNKRKFFGLIERPVLPPHLPADVAAYKVFVCGKSGVGKTSFIAKLSGLAVPSMHHETAGIQTTCMYWPVRPSGSARPVIFRFQFWDCGEGALRKFDHILPACKEKADAVLFLFSFTDRSSFEDVPALISRTLDQDEDVTRVVIGTKLDQYMHTDVTEDDLRDFQRTWQLPVMRVRSVNGPRMTDGRDLDGRAGLAECAPVLNGLAEILWHRDQVIAGLVGGAE.

Positions 46 to 249 are small GTPase-like; the sequence is PADVAAYKVF…VIAGLVGGAE (204 aa). GTP contacts are provided by residues 58–65 and 171–174; these read GKSGVGKT and TKLD.

This sequence belongs to the small GTPase superfamily. Rab family. In terms of assembly, interacts with fuz.

It localises to the cytoplasm. The protein resides in the cytoskeleton. It is found in the cilium basal body. Its function is as follows. Potential effector of the planar cell polarity signaling pathway. Plays a role in targeted membrane trafficking most probably at the level of vesicle fusion with membranes. Involved in cilium biogenesis by regulating the transport of cargo proteins to the basal body and to the apical tips of cilia. More generally involved in exocytosis in secretory cells. This is Ciliogenesis and planar polarity effector 2 from Xenopus laevis (African clawed frog).